The sequence spans 64 residues: Large ribosomal subunit protein bL35 (64 aa).

Residues 1 to 42 (MPKAKTHSGASKRFRRTGTGKIVRQKANRRHLLEHKSSKRTR) are compositionally biased toward basic residues. Positions 1–64 (MPKAKTHSGA…TKRVKSLLNG (64 aa)) are disordered.

The protein belongs to the bacterial ribosomal protein bL35 family.

The sequence is that of Large ribosomal subunit protein bL35 from Mycobacterium ulcerans (strain Agy99).